We begin with the raw amino-acid sequence, 363 residues long: UDP-3-O-acylglucosamine N-acyltransferase (363 aa).

His237 acts as the Proton acceptor in catalysis. The segment at 338 to 363 (EQNSTDRAPNAKMLEVGVDPETTCSS) is disordered.

Belongs to the transferase hexapeptide repeat family. LpxD subfamily. As to quaternary structure, homotrimer.

The enzyme catalyses a UDP-3-O-[(3R)-3-hydroxyacyl]-alpha-D-glucosamine + a (3R)-hydroxyacyl-[ACP] = a UDP-2-N,3-O-bis[(3R)-3-hydroxyacyl]-alpha-D-glucosamine + holo-[ACP] + H(+). The protein operates within bacterial outer membrane biogenesis; LPS lipid A biosynthesis. In terms of biological role, catalyzes the N-acylation of UDP-3-O-acylglucosamine using 3-hydroxyacyl-ACP as the acyl donor. Is involved in the biosynthesis of lipid A, a phosphorylated glycolipid that anchors the lipopolysaccharide to the outer membrane of the cell. The sequence is that of UDP-3-O-acylglucosamine N-acyltransferase from Synechococcus sp. (strain JA-2-3B'a(2-13)) (Cyanobacteria bacterium Yellowstone B-Prime).